Consider the following 323-residue polypeptide: Elongation factor P--(R)-beta-lysine ligase (323 aa).

76-78 (SPE) lines the substrate pocket. ATP contacts are provided by residues 100–102 (RNE) and N109. Substrate is bound at residue Y118. Residue 242 to 243 (EL) participates in ATP binding. E249 serves as a coordination point for substrate. G298 is an ATP binding site.

It belongs to the class-II aminoacyl-tRNA synthetase family. EpmA subfamily. Homodimer.

The catalysed reaction is D-beta-lysine + L-lysyl-[protein] + ATP = N(6)-((3R)-3,6-diaminohexanoyl)-L-lysyl-[protein] + AMP + diphosphate + H(+). Functionally, with EpmB is involved in the beta-lysylation step of the post-translational modification of translation elongation factor P (EF-P). Catalyzes the ATP-dependent activation of (R)-beta-lysine produced by EpmB, forming a lysyl-adenylate, from which the beta-lysyl moiety is then transferred to the epsilon-amino group of a conserved specific lysine residue in EF-P. This chain is Elongation factor P--(R)-beta-lysine ligase, found in Actinobacillus succinogenes (strain ATCC 55618 / DSM 22257 / CCUG 43843 / 130Z).